The primary structure comprises 330 residues: ADP-L-glycero-D-manno-heptose-6-epimerase (330 aa).

NADP(+)-binding positions include 11-12 (FI), 32-33 (DN), Lys39, Lys54, 75-79 (EGACS), and Asn92. Tyr139 functions as the Proton acceptor in the catalytic mechanism. An NADP(+)-binding site is contributed by Lys143. Asn168 contacts substrate. NADP(+) contacts are provided by Val169 and Lys177. Catalysis depends on Lys177, which acts as the Proton acceptor. Residues Arg179, His186, 200-203 (FGEY), Arg213, and Tyr292 contribute to the substrate site.

Belongs to the NAD(P)-dependent epimerase/dehydratase family. HldD subfamily. As to quaternary structure, homopentamer. NADP(+) serves as cofactor.

It carries out the reaction ADP-D-glycero-beta-D-manno-heptose = ADP-L-glycero-beta-D-manno-heptose. The protein operates within nucleotide-sugar biosynthesis; ADP-L-glycero-beta-D-manno-heptose biosynthesis; ADP-L-glycero-beta-D-manno-heptose from D-glycero-beta-D-manno-heptose 7-phosphate: step 4/4. Its function is as follows. Catalyzes the interconversion between ADP-D-glycero-beta-D-manno-heptose and ADP-L-glycero-beta-D-manno-heptose via an epimerization at carbon 6 of the heptose. This chain is ADP-L-glycero-D-manno-heptose-6-epimerase, found in Burkholderia cenocepacia (strain ATCC BAA-245 / DSM 16553 / LMG 16656 / NCTC 13227 / J2315 / CF5610) (Burkholderia cepacia (strain J2315)).